The following is a 386-amino-acid chain: Flap endonuclease 1 (386 aa).

Positions 1 to 104 (MGILGLSKLI…GELAKRAERR (104 aa)) are N-domain. Asp-34 contacts Mg(2+). Positions 47 and 70 each coordinate DNA. Positions 86, 158, 160, 179, and 181 each coordinate Mg(2+). The tract at residues 122 to 253 (EIEKFNRRLV…KRAIELINNY (132 aa)) is I-domain. A DNA-binding site is contributed by Glu-158. Positions 231 and 233 each coordinate DNA. Position 233 (Asp-233) interacts with Mg(2+). Residues 336-344 (TQVRLDSFF) form an interaction with PCNA region. The segment at 354–386 (VNAAKRKAEEAKKSANNKKAKTSGGAARGRRPK) is disordered.

Belongs to the XPG/RAD2 endonuclease family. FEN1 subfamily. Interacts with PCNA. Three molecules of FEN1 bind to one PCNA trimer with each molecule binding to one PCNA monomer. PCNA stimulates the nuclease activity without altering cleavage specificity. It depends on Mg(2+) as a cofactor. Post-translationally, phosphorylated. Phosphorylation upon DNA damage induces relocalization to the nuclear plasma.

It is found in the nucleus. It localises to the nucleolus. Its subcellular location is the nucleoplasm. The protein resides in the mitochondrion. Functionally, structure-specific nuclease with 5'-flap endonuclease and 5'-3' exonuclease activities involved in DNA replication and repair. During DNA replication, cleaves the 5'-overhanging flap structure that is generated by displacement synthesis when DNA polymerase encounters the 5'-end of a downstream Okazaki fragment. It enters the flap from the 5'-end and then tracks to cleave the flap base, leaving a nick for ligation. Also involved in the long patch base excision repair (LP-BER) pathway, by cleaving within the apurinic/apyrimidinic (AP) site-terminated flap. Acts as a genome stabilization factor that prevents flaps from equilibrating into structures that lead to duplications and deletions. Also possesses 5'-3' exonuclease activity on nicked or gapped double-stranded DNA, and exhibits RNase H activity. Also involved in replication and repair of rDNA and in repairing mitochondrial DNA. The polypeptide is Flap endonuclease 1 (Drosophila pseudoobscura pseudoobscura (Fruit fly)).